Consider the following 152-residue polypeptide: Deoxyuridine 5'-triphosphate nucleotidohydrolase (152 aa).

Residues R72 to G74, N85, and T89 to D91 each bind substrate.

It belongs to the dUTPase family. Mg(2+) is required as a cofactor.

The enzyme catalyses dUTP + H2O = dUMP + diphosphate + H(+). Its pathway is pyrimidine metabolism; dUMP biosynthesis; dUMP from dCTP (dUTP route): step 2/2. Its function is as follows. This enzyme is involved in nucleotide metabolism: it produces dUMP, the immediate precursor of thymidine nucleotides and it decreases the intracellular concentration of dUTP so that uracil cannot be incorporated into DNA. The protein is Deoxyuridine 5'-triphosphate nucleotidohydrolase of Rhodopseudomonas palustris (strain BisB5).